The chain runs to 865 residues: DNA topoisomerase 1 (865 aa).

Residues 3 to 142 (KALVIVESPA…RYSRVVFNEI (140 aa)) enclose the Toprim domain. Residue Glu-9 participates in Mg(2+) binding. Residues 37–65 (LPTSGSAAKKSADSTSTKTAKKPKKDERG) form a disordered region. Residues 39-54 (TSGSAAKKSADSTSTK) show a composition bias toward low complexity. Residue Asp-111 coordinates Mg(2+). Residues 158-575 (NIDRVNAQQA…HFFSDFTQQL (418 aa)) form the Topo IA-type catalytic domain. Residues 192-197 (SAGRVQ) are interaction with DNA. Residue Tyr-319 is the O-(5'-phospho-DNA)-tyrosine intermediate of the active site. C4-type zinc fingers lie at residues 599–630 (CPTCGRKMGIRTASTGVFLGCSGYALPPKERC), 662–689 (CPKCGTAMDSYLIDPKRKLHVCGNNPTC), and 711–736 (CEKCGSEMHLKMGRFGKYMACTNEEC).

Belongs to the type IA topoisomerase family. As to quaternary structure, monomer. It depends on Mn(2+) as a cofactor. The cofactor is Ca(2+).

The enzyme catalyses ATP-independent breakage of single-stranded DNA, followed by passage and rejoining.. Functionally, releases the supercoiling and torsional tension of DNA, which is introduced during the DNA replication and transcription, by transiently cleaving and rejoining one strand of the DNA duplex. Introduces a single-strand break via transesterification at a target site in duplex DNA. The scissile phosphodiester is attacked by the catalytic tyrosine of the enzyme, resulting in the formation of a DNA-(5'-phosphotyrosyl)-enzyme intermediate and the expulsion of a 3'-OH DNA strand. The free DNA strand then undergoes passage around the unbroken strand, thus removing DNA supercoils. Finally, in the religation step, the DNA 3'-OH attacks the covalent intermediate to expel the active-site tyrosine and restore the DNA phosphodiester backbone. The sequence is that of DNA topoisomerase 1 from Escherichia coli (strain K12).